The following is a 609-amino-acid chain: Tyrosine-protein kinase transforming protein Fes (609 aa).

2 disordered regions span residues 1–20 (AARA…PQGH) and 152–208 (RDSA…GGRT). The F-BAR; degenerate domain maps to 8-174 (MGFSSELCSP…SKDKDRDKAK (167 aa)). Composition is skewed to basic and acidic residues over residues 160–175 (KYQE…KAKL) and 190–206 (QDDR…REGG). The 90-residue stretch at 247–336 (WYHGALPRAE…KSGIVLNRAV (90 aa)) folds into the SH2 domain. Positions 348-609 (LVLGEQIGRG…ELQSIRKRHR (262 aa)) constitute a Protein kinase domain. ATP contacts are provided by residues 354 to 362 (IGRGNFGEV) and K377. D470 acts as the Proton acceptor in catalysis. Y500 is modified (phosphotyrosine; by autocatalysis).

It belongs to the protein kinase superfamily. Tyr protein kinase family. Fes/fps subfamily.

The catalysed reaction is L-tyrosyl-[protein] + ATP = O-phospho-L-tyrosyl-[protein] + ADP + H(+). The chain is Tyrosine-protein kinase transforming protein Fes (V-FES) from Felidae (cat family).